The sequence spans 405 residues: tRNA N6-adenosine threonylcarbamoyltransferase, mitochondrial (405 aa).

A mitochondrion-targeting transit peptide spans 1-19 (MAKYISNLSRIAVVRGRVS). H138 and H142 together coordinate a divalent metal cation. Substrate contacts are provided by residues 160-164 (LISGG), D193, G213, E217, 320-321 (SN), and T348. D349 serves as a coordination point for a divalent metal cation.

The protein belongs to the KAE1 / TsaD family. As to quaternary structure, monomer. Requires a divalent metal cation as cofactor.

It is found in the mitochondrion. The enzyme catalyses L-threonylcarbamoyladenylate + adenosine(37) in tRNA = N(6)-L-threonylcarbamoyladenosine(37) in tRNA + AMP + H(+). Functionally, required for the formation of a threonylcarbamoyl group on adenosine at position 37 (t(6)A37) in mitochondrial tRNAs that read codons beginning with adenine. Probably involved in the transfer of the threonylcarbamoyl moiety of threonylcarbamoyl-AMP (TC-AMP) to the N6 group of A37. Involved in mitochondrial genome maintenance. This Xenopus tropicalis (Western clawed frog) protein is tRNA N6-adenosine threonylcarbamoyltransferase, mitochondrial.